Reading from the N-terminus, the 277-residue chain is Thiazole synthase (277 aa).

Lys-118 serves as the catalytic Schiff-base intermediate with DXP. 1-deoxy-D-xylulose 5-phosphate contacts are provided by residues Gly-179, 205-206 (AG), and 227-228 (NT).

Belongs to the ThiG family. As to quaternary structure, homotetramer. Forms heterodimers with either ThiH or ThiS.

The protein resides in the plastid. Its subcellular location is the chloroplast. The enzyme catalyses [ThiS sulfur-carrier protein]-C-terminal-Gly-aminoethanethioate + 2-iminoacetate + 1-deoxy-D-xylulose 5-phosphate = [ThiS sulfur-carrier protein]-C-terminal Gly-Gly + 2-[(2R,5Z)-2-carboxy-4-methylthiazol-5(2H)-ylidene]ethyl phosphate + 2 H2O + H(+). It participates in cofactor biosynthesis; thiamine diphosphate biosynthesis. Its function is as follows. Catalyzes the rearrangement of 1-deoxy-D-xylulose 5-phosphate (DXP) to produce the thiazole phosphate moiety of thiamine. Sulfur is provided by the thiocarboxylate moiety of the carrier protein ThiS. In vitro, sulfur can be provided by H(2)S. The polypeptide is Thiazole synthase (Emiliania huxleyi (Coccolithophore)).